A 1387-amino-acid polypeptide reads, in one-letter code: DNA-directed RNA polymerase subunit beta (1387 aa).

This sequence belongs to the RNA polymerase beta chain family. As to quaternary structure, the RNAP catalytic core consists of 2 alpha, 1 beta, 1 beta' and 1 omega subunit. When a sigma factor is associated with the core the holoenzyme is formed, which can initiate transcription.

It catalyses the reaction RNA(n) + a ribonucleoside 5'-triphosphate = RNA(n+1) + diphosphate. Functionally, DNA-dependent RNA polymerase catalyzes the transcription of DNA into RNA using the four ribonucleoside triphosphates as substrates. This Xanthomonas campestris pv. campestris (strain 8004) protein is DNA-directed RNA polymerase subunit beta.